Consider the following 297-residue polypeptide: Light-independent protochlorophyllide reductase iron-sulfur ATP-binding protein (297 aa).

ATP-binding positions include 41–46 (GIGKST) and Lys-70. Mg(2+) is bound at residue Ser-45. 2 residues coordinate [4Fe-4S] cluster: Cys-126 and Cys-160. ATP-binding positions include 211–212 (NR) and 235–237 (PDL).

The protein belongs to the NifH/BchL/ChlL family. In terms of assembly, homodimer. Protochlorophyllide reductase is composed of three subunits; BchL, BchN and BchB. Requires [4Fe-4S] cluster as cofactor.

The enzyme catalyses chlorophyllide a + oxidized 2[4Fe-4S]-[ferredoxin] + 2 ADP + 2 phosphate = protochlorophyllide a + reduced 2[4Fe-4S]-[ferredoxin] + 2 ATP + 2 H2O. It functions in the pathway porphyrin-containing compound metabolism; bacteriochlorophyll biosynthesis (light-independent). Component of the dark-operative protochlorophyllide reductase (DPOR) that uses Mg-ATP and reduced ferredoxin to reduce ring D of protochlorophyllide (Pchlide) to form chlorophyllide a (Chlide). This reaction is light-independent. The L component serves as a unique electron donor to the NB-component of the complex, and binds Mg-ATP. The protein is Light-independent protochlorophyllide reductase iron-sulfur ATP-binding protein of Methylorubrum populi (strain ATCC BAA-705 / NCIMB 13946 / BJ001) (Methylobacterium populi).